Here is a 211-residue protein sequence, read N- to C-terminus: Probable nicotinate-nucleotide adenylyltransferase (211 aa).

It belongs to the NadD family.

It catalyses the reaction nicotinate beta-D-ribonucleotide + ATP + H(+) = deamido-NAD(+) + diphosphate. It functions in the pathway cofactor biosynthesis; NAD(+) biosynthesis; deamido-NAD(+) from nicotinate D-ribonucleotide: step 1/1. In terms of biological role, catalyzes the reversible adenylation of nicotinate mononucleotide (NaMN) to nicotinic acid adenine dinucleotide (NaAD). In Gemmatimonas aurantiaca (strain DSM 14586 / JCM 11422 / NBRC 100505 / T-27), this protein is Probable nicotinate-nucleotide adenylyltransferase.